A 426-amino-acid chain; its full sequence is Histidine--tRNA ligase (426 aa).

The protein belongs to the class-II aminoacyl-tRNA synthetase family.

The protein localises to the cytoplasm. It catalyses the reaction tRNA(His) + L-histidine + ATP = L-histidyl-tRNA(His) + AMP + diphosphate + H(+). This is Histidine--tRNA ligase from Sulfurisphaera tokodaii (strain DSM 16993 / JCM 10545 / NBRC 100140 / 7) (Sulfolobus tokodaii).